The chain runs to 539 residues: Lysophospholipid acyltransferase LPEAT2 (539 aa).

Residues 93–113 form a helical membrane-spanning segment; the sequence is LVICLPIALIRLVLFAASLAV. The short motif at 178–183 is the HXXXXD motif element; sequence HVSYIE. EF-hand domains lie at 426–455, 457–492, and 493–528; these read KRIF…VLTQ, LFKQ…TIPN, and LNKD…NPLL. Asp470, Asp472, Asp474, Tyr476, Glu481, Asp506, Asp508, Asp510, Arg512, and Asp517 together coordinate Ca(2+).

Belongs to the 1-acyl-sn-glycerol-3-phosphate acyltransferase family.

It localises to the golgi apparatus membrane. It is found in the late endosome membrane. The catalysed reaction is a 1-acyl-sn-glycero-3-phosphoethanolamine + an acyl-CoA = a 1,2-diacyl-sn-glycero-3-phosphoethanolamine + CoA. The enzyme catalyses a 1-acyl-sn-glycero-3-phosphocholine + an acyl-CoA = a 1,2-diacyl-sn-glycero-3-phosphocholine + CoA. It catalyses the reaction a 1-acyl-sn-glycero-3-phospho-L-serine + an acyl-CoA = a 1,2-diacyl-sn-glycero-3-phospho-L-serine + CoA. Its pathway is lipid metabolism; phospholipid metabolism. Its function is as follows. Possesses acyl-CoA-dependent lysophospholipid acyltransferase activity with a subset of lysophospholipids as substrates. Exhibits strong acylation activity on lysophosphatidylethanolamine (LPE), and lower activity on lysophosphatidylcholine (LPC) and lysophosphatidylserine (LPS). Exhibits acylation activity on both LPE and LPC. Has a preference for 18:1-LPE over 16:0-LPE as acceptor. Palmitoyl-CoA (16:0-CoA) is a better acyl donor than oleoyl-CoA (18:1-CoA). Among several different acyl-CoA species the best acyl donor is eicosanoyl-CoA (20:0-CoA). Activity is calcium-independent. Its activity is essential for maintaining adequate levels of phosphatidylethanolamine (PE), LPE and LPC in the cells, which is crucial for plant growth regulation. The sequence is that of Lysophospholipid acyltransferase LPEAT2 from Arabidopsis thaliana (Mouse-ear cress).